Consider the following 73-residue polypeptide: Cell division protein ZapB (73 aa).

Residues 3–69 are a coiled coil; the sequence is LELLSKLETK…EKVTGLVGLL (67 aa). Residues 30-50 are disordered; sequence EKQKSSTLSEHNQQLNEQNQQ. Residues 41–50 are compositionally biased toward low complexity; it reads NQQLNEQNQQ.

This sequence belongs to the ZapB family. In terms of assembly, homodimer. The ends of the coiled-coil dimer bind to each other, forming polymers. Interacts with FtsZ.

It is found in the cytoplasm. Non-essential, abundant cell division factor that is required for proper Z-ring formation. It is recruited early to the divisome by direct interaction with FtsZ, stimulating Z-ring assembly and thereby promoting cell division earlier in the cell cycle. Its recruitment to the Z-ring requires functional FtsA or ZipA. This Shewanella putrefaciens (strain CN-32 / ATCC BAA-453) protein is Cell division protein ZapB.